The sequence spans 445 residues: Phosphoglucosamine mutase (445 aa).

The active-site Phosphoserine intermediate is S102. Mg(2+)-binding residues include S102, D241, D243, and D245. S102 is modified (phosphoserine).

The protein belongs to the phosphohexose mutase family. The cofactor is Mg(2+). Activated by phosphorylation.

It catalyses the reaction alpha-D-glucosamine 1-phosphate = D-glucosamine 6-phosphate. Catalyzes the conversion of glucosamine-6-phosphate to glucosamine-1-phosphate. This is Phosphoglucosamine mutase from Aliivibrio salmonicida (strain LFI1238) (Vibrio salmonicida (strain LFI1238)).